The chain runs to 251 residues: UDP-N-acetylglucosamine--dolichyl-phosphate N-acetylglucosaminyltransferase (251 aa).

A helical transmembrane segment spans residues 150 to 167 (VGNLGLSFITFLLGGYYV).

Belongs to the glycosyltransferase 2 family.

The protein resides in the cell membrane. The catalysed reaction is a di-trans,poly-cis-dolichyl phosphate + UDP-N-acetyl-alpha-D-glucosamine = an N-acetyl-alpha-D-glucosaminyl-phospho-di-trans,poly-cis-dolichol + UDP. It participates in cell surface structure biogenesis; S-layer biogenesis. It functions in the pathway protein modification; protein glycosylation. Functionally, involved in the assembly of an N-linked disaccharide that decorates the S-layer glycoprotein and flagellins. AglK initiates N-linked glycosylation through the formation of alpha-linked dolichyl monophosphate N-acetylglucosamine. It catalyzes the transfer of GlcNAc from the donor substrate UDP-GlcNAc to dolichyl phosphate C55 (Dol-P) to yield Dol-P-GlcNAc. AglK reaction proceeds with retention of stereochemistry. The reaction is specific for UDP-GlcNAc. AglK shows a stronger preference for short dolichol (C55-60 Dol-P) substrates compared with the longer (C85-105 Dol-P). This chain is UDP-N-acetylglucosamine--dolichyl-phosphate N-acetylglucosaminyltransferase, found in Methanococcus voltae.